The chain runs to 286 residues: uncharacterized protein (286 aa).

NAD(+)-binding positions include 4–18 and Thr95; that span reads AVIGLGNMGQPIARN. Residue Lys171 is part of the active site. Lys239 contributes to the NAD(+) binding site.

This sequence belongs to the HIBADH-related family.

This is an uncharacterized protein from Bacillus subtilis (strain 168).